Reading from the N-terminus, the 257-residue chain is Probable septum site-determining protein MinC (257 aa).

Belongs to the MinC family. In terms of assembly, interacts with MinD and FtsZ.

Functionally, cell division inhibitor that blocks the formation of polar Z ring septums. Rapidly oscillates between the poles of the cell to destabilize FtsZ filaments that have formed before they mature into polar Z rings. Prevents FtsZ polymerization. This is Probable septum site-determining protein MinC from Burkholderia lata (strain ATCC 17760 / DSM 23089 / LMG 22485 / NCIMB 9086 / R18194 / 383).